Consider the following 60-residue polypeptide: Large ribosomal subunit protein bL32 (60 aa).

Residues 1-16 (MAVPKRKTTPSKRGMR) show a composition bias toward basic residues. Positions 1-34 (MAVPKRKTTPSKRGMRRAHDALSSPVYIEDKDSG) are disordered.

Belongs to the bacterial ribosomal protein bL32 family.

In Maricaulis maris (strain MCS10) (Caulobacter maris), this protein is Large ribosomal subunit protein bL32.